A 238-amino-acid chain; its full sequence is Dof zinc finger protein MNB1A (238 aa).

Low complexity predominate over residues 1-13 (MQEASSAAAAGAE). A disordered region spans residues 1 to 48 (MQEASSAAAAGAEPGRRAAQHQFAGVDLRRPKGYAAPAPAPAVGEGDP). A Dof-type zinc finger spans residues 47–101 (DPCPRCASRDTKFCYYNNYNTSQPRHFCKGCRRYWTKGGTLRNVPVGGGTRKKPS). Zn(2+)-binding residues include Cys49, Cys52, Cys74, and Cys77. Residues 85 to 155 (GTLRNVPVGG…TATTTTTTSE (71 aa)) form a disordered region. The span at 119-130 (PKKKPASKKRRV) shows a compositional bias: basic residues. Residues 138–155 (ATAADPGKTATTTTTTSE) show a composition bias toward low complexity.

In terms of tissue distribution, expressed in all tissues examined.

The protein resides in the nucleus. In terms of biological role, transcription factor that binds specifically to a 5'-AA[AG]G-3' consensus core sequence at the MNF1-binding site. In Zea mays (Maize), this protein is Dof zinc finger protein MNB1A (MNB1A).